A 148-amino-acid polypeptide reads, in one-letter code: UPF0179 protein Mevan_0979 (148 aa).

It belongs to the UPF0179 family.

The chain is UPF0179 protein Mevan_0979 from Methanococcus vannielii (strain ATCC 35089 / DSM 1224 / JCM 13029 / OCM 148 / SB).